The following is a 30-amino-acid chain: Acidic phospholipase A2 homolog cannitoxin gamma chain (30 aa).

In terms of assembly, heterotrimer of alpha, beta, and gamma chains; non-covalently linked. Glycosylated. As to expression, expressed by the venom gland.

It is found in the secreted. Functionally, heterotrimer: Snake venom phospholipase A2 (PLA2) heterotrimer that acts as a potent presynaptic neurotoxin by blocking synaptic transmission and synaptic vesicle recycling. Enzymatic activity is essential for the neurotoxic effects. May act by binding in a calcium-dependent fashion to neurotonal pentraxin-1 (NPTX1) and neurotonal pentraxin-2 (NPTX2), but not to neuronal pentraxin receptor (NPTXR). Also binds to taipoxin-associated calcium binding protein 49 (RCN2), a protein localized in the lumen of endoplasmic reticulum. Its function is as follows. Monomer (gamma chain): Snake venom phospholipase A2 homolog that is neither toxic nor enzymatically active. Does not bind calcium. This chain is Acidic phospholipase A2 homolog cannitoxin gamma chain, found in Oxyuranus scutellatus canni (Papuan taipan).